A 379-amino-acid chain; its full sequence is UDP-N-acetylglucosamine--N-acetylmuramyl-(pentapeptide) pyrophosphoryl-undecaprenol N-acetylglucosamine transferase (379 aa).

Residues 17–19, asparagine 128, arginine 169, serine 197, and glutamine 298 each bind UDP-N-acetyl-alpha-D-glucosamine; that span reads TGG.

Belongs to the glycosyltransferase 28 family. MurG subfamily.

The protein resides in the cell inner membrane. It carries out the reaction di-trans,octa-cis-undecaprenyl diphospho-N-acetyl-alpha-D-muramoyl-L-alanyl-D-glutamyl-meso-2,6-diaminopimeloyl-D-alanyl-D-alanine + UDP-N-acetyl-alpha-D-glucosamine = di-trans,octa-cis-undecaprenyl diphospho-[N-acetyl-alpha-D-glucosaminyl-(1-&gt;4)]-N-acetyl-alpha-D-muramoyl-L-alanyl-D-glutamyl-meso-2,6-diaminopimeloyl-D-alanyl-D-alanine + UDP + H(+). Its pathway is cell wall biogenesis; peptidoglycan biosynthesis. Cell wall formation. Catalyzes the transfer of a GlcNAc subunit on undecaprenyl-pyrophosphoryl-MurNAc-pentapeptide (lipid intermediate I) to form undecaprenyl-pyrophosphoryl-MurNAc-(pentapeptide)GlcNAc (lipid intermediate II). This chain is UDP-N-acetylglucosamine--N-acetylmuramyl-(pentapeptide) pyrophosphoryl-undecaprenol N-acetylglucosamine transferase, found in Brucella canis (strain ATCC 23365 / NCTC 10854 / RM-666).